The sequence spans 415 residues: Serine--tRNA ligase (415 aa).

231 to 233 is an L-serine binding site; the sequence is TAE. 262–264 lines the ATP pocket; sequence RSE. An L-serine-binding site is contributed by E285. An ATP-binding site is contributed by 349–352; it reads EISS. S383 is an L-serine binding site.

This sequence belongs to the class-II aminoacyl-tRNA synthetase family. Type-1 seryl-tRNA synthetase subfamily. As to quaternary structure, homodimer. The tRNA molecule binds across the dimer.

Its subcellular location is the cytoplasm. The enzyme catalyses tRNA(Ser) + L-serine + ATP = L-seryl-tRNA(Ser) + AMP + diphosphate + H(+). It carries out the reaction tRNA(Sec) + L-serine + ATP = L-seryl-tRNA(Sec) + AMP + diphosphate + H(+). The protein operates within aminoacyl-tRNA biosynthesis; selenocysteinyl-tRNA(Sec) biosynthesis; L-seryl-tRNA(Sec) from L-serine and tRNA(Sec): step 1/1. In terms of biological role, catalyzes the attachment of serine to tRNA(Ser). Is also able to aminoacylate tRNA(Sec) with serine, to form the misacylated tRNA L-seryl-tRNA(Sec), which will be further converted into selenocysteinyl-tRNA(Sec). This is Serine--tRNA ligase from Helicobacter pylori (strain HPAG1).